A 507-amino-acid chain; its full sequence is Maturase K (507 aa).

The protein belongs to the intron maturase 2 family. MatK subfamily.

The protein resides in the plastid. It localises to the chloroplast. Usually encoded in the trnK tRNA gene intron. Probably assists in splicing its own and other chloroplast group II introns. This Liriodendron chinense (Chinese tulip tree) protein is Maturase K.